Consider the following 562-residue polypeptide: Calcium-dependent protein kinase 5 (562 aa).

The Protein kinase domain maps to 118 to 372 (ELDKYKLGKG…VHKIVNHKWF (255 aa)). ATP contacts are provided by residues 124-132 (LGKGSYGNV) and K147. Residue D238 is the Proton acceptor of the active site. Positions 394 to 402 (KFKKFHKLC) match the J domain autoinhibitory motif motif. A j domain region spans residues 394 to 429 (KFKKFHKLCKIKKLAITCIAYQLNKKKFGKMKKTFE). The J domain EF-hand interaction motif signature appears at 403 to 412 (KIKKLAITCI). EF-hand domains lie at 419 to 453 (KKFG…VGDN), 454 to 489 (EIDR…HSIL), 490 to 525 (EQDA…SNDQ), and 528 to 562 (FSKE…GRQS). D432, N434, D436, E443, D467, D469, N471, E478, D503, N505, D507, E514, D541, N543, D545, Y547, and E552 together coordinate Ca(2+).

The protein belongs to the protein kinase superfamily. Ser/Thr protein kinase family. CDPK subfamily. Requires Mg(2+) as cofactor. May be palmitoylated. In terms of processing, autophosphorylated in vitro.

Its subcellular location is the cytoplasm. The protein localises to the cytoplasmic vesicle. It is found in the secretory vesicle. The protein resides in the microneme membrane. It localises to the cell membrane. It carries out the reaction L-seryl-[protein] + ATP = O-phospho-L-seryl-[protein] + ADP + H(+). The catalysed reaction is L-threonyl-[protein] + ATP = O-phospho-L-threonyl-[protein] + ADP + H(+). With respect to regulation, activated by calcium. Upon calcium binding to the EF-hand domains, the C-terminus of the junction domain (J domain) undergoes a conformational change which results in the dissociation of the pseudo-substrate inhibitory motif from the catalytic domain. This, in turn, may facilitate the autophosphorylation of the activation loop at Thr-278, which leads to the kinase activation. Its function is as follows. Calcium-dependent protein kinase which acts as a sensor and effector of intracellular Ca(2+) levels probably in part downstream of cGMP-activated PKG kinase. Plays a central role in host erythrocytes and hepatocytes infection cycles. During the liver stage, involved in sporozoite motility and thus in sporozoite invasion of host hepatocytes, probably together with CDPK1 and CDPK4. Involved in merosome egress from host hepatocytes, probably together with CDPK4. Required for the release of hepatic merozoites from merosomes in the host blood stream. During the asexual blood stage, required for merozoite egress from host erythrocytes by triggering microneme secretion. Phosphorylates transporter NPT1 at late schizont stage. The sequence is that of Calcium-dependent protein kinase 5 from Plasmodium berghei (strain Anka).